A 142-amino-acid chain; its full sequence is Large ribosomal subunit protein uL13 (142 aa).

This sequence belongs to the universal ribosomal protein uL13 family. As to quaternary structure, part of the 50S ribosomal subunit.

In terms of biological role, this protein is one of the early assembly proteins of the 50S ribosomal subunit, although it is not seen to bind rRNA by itself. It is important during the early stages of 50S assembly. The sequence is that of Large ribosomal subunit protein uL13 from Acinetobacter baumannii (strain AB0057).